The primary structure comprises 221 residues: MTYRDRPLGELAISIPRATRLFRQYELDFCCGGKLTLQRAAARHSLDLVMLESQLAELDSTPDQHRDWRQAPLDELCAFIVTRYHQRHRDQLPELVLMAQKVEQVHTGKTGCPRGLAKQLDSLRQELDSHMMKEERILFPLIEQGEGARCHGPISVMEHEHRDAGELLDVIRFLTDNMTPPTGACTTWRALYAGISELINDLMEHVSLENNLLFPRALGDV.

This sequence belongs to the RIC family. YtfE subfamily. As to quaternary structure, homodimer.

Its subcellular location is the cytoplasm. Functionally, di-iron-containing protein involved in the repair of iron-sulfur clusters damaged by oxidative and nitrosative stress conditions. The polypeptide is Iron-sulfur cluster repair protein YtfE (Edwardsiella ictaluri (strain 93-146)).